Reading from the N-terminus, the 551-residue chain is Glucans biosynthesis protein D (551 aa).

The tat-type signal signal peptide spans 1-32; the sequence is MDRRRFIKGSMAMAAVCGTSGIASLFSQAAFA.

It belongs to the OpgD/OpgG family. In terms of processing, predicted to be exported by the Tat system. The position of the signal peptide cleavage has not been experimentally proven.

The protein localises to the periplasm. It functions in the pathway glycan metabolism; osmoregulated periplasmic glucan (OPG) biosynthesis. Functionally, probably involved in the control of the structural glucose backbone of osmoregulated periplasmic glucans (OPGs). The chain is Glucans biosynthesis protein D (mdoD) from Shigella flexneri.